Consider the following 343-residue polypeptide: Peroxisome assembly protein 12 (343 aa).

The Peroxisomal matrix segment spans residues 1–5 (MDSPS). Residues 6-33 (LLEVLQVQQVEKLISPSLRFILAYFTHR) traverse the membrane as a helical segment. At 34–37 (YPRF) the chain is on the cytoplasmic side. The helical transmembrane segment at 38–62 (LLRAYNSFDGIYLLVKLLLEKSQLK) threads the bilayer. Residues 63–102 (KWNATSVERRFQLKRVIAVRDSSIIAEEFPQESESATSLN) lie on the Peroxisomal matrix side of the membrane. The chain crosses the membrane as a helical span at residues 103–140 (GIDVLKKLFLTYCIPYLLEKCESLTTVKENHTAVSILS). The Cytoplasmic segment spans residues 141–146 (LQARDK). The chain crosses the membrane as a helical span at residues 147 to 193 (QKGALSVFYSKIKILLVRLKKILHFVFRLIRKSNTYLQWLYYLLYAL). At 194–238 (GKTPYTNLADHILRQRVIYNVENIHSRKLISTREKSSLLTSIADH) the chain is on the peroxisomal matrix side. A helical transmembrane segment spans residues 239 to 266 (SMEGFLIIIQLIDWWQSNNYESHLKKGE). Residues 267-343 (VAFTELAPPK…KGESFWRLMI (77 aa)) are Cytoplasmic-facing. Cysteine 289, cysteine 292, cysteine 309, and cysteine 312 together coordinate Zn(2+). The RING-type; degenerate zinc finger occupies 289-328 (CKICGEKIKNPAVLSTGFVFCYPCIQVWLQRHPFKCPVTN).

It belongs to the pex2/pex10/pex12 family. In terms of assembly, component of the PEX2-PEX10-PEX12 retrotranslocation channel, composed of PEX2, PEX10 and PEX12.

Its subcellular location is the peroxisome membrane. Its pathway is protein modification; protein ubiquitination. Its function is as follows. Component of a retrotranslocation channel required for peroxisome organization by mediating export of the PEX5 receptor from peroxisomes to the cytosol, thereby promoting PEX5 recycling. The retrotranslocation channel is composed of PEX2, PEX10 and PEX12; each subunit contributing transmembrane segments that coassemble into an open channel that specifically allows the passage of PEX5 through the peroxisomal membrane. PEX12 also regulates PEX5 recycling by activating the E3 ubiquitin-protein ligase activity of PEX10. When PEX5 recycling is compromised, PEX12 stimulates PEX10-mediated polyubiquitination of PEX5, leading to its subsequent degradation. The protein is Peroxisome assembly protein 12 (pex12) of Schizosaccharomyces pombe (strain 972 / ATCC 24843) (Fission yeast).